The chain runs to 377 residues: Chaperone protein DnaJ (377 aa).

Residues 5-70 (DYYEILGVSK…EKRSAYDQYG (66 aa)) enclose the J domain. Residues 131–209 (GVVREICVPT…CRGSGRIERT (79 aa)) form a CR-type zinc finger. Positions 144, 147, 161, 164, 183, 186, 197, and 200 each coordinate Zn(2+). CXXCXGXG motif repeat units lie at residues 144-151 (CLQCRGSG), 161-168 (CVTCHGHG), 183-190 (CPSCNGHG), and 197-204 (CNKCRGSG).

The protein belongs to the DnaJ family. Homodimer. It depends on Zn(2+) as a cofactor.

Its subcellular location is the cytoplasm. Its function is as follows. Participates actively in the response to hyperosmotic and heat shock by preventing the aggregation of stress-denatured proteins and by disaggregating proteins, also in an autonomous, DnaK-independent fashion. Unfolded proteins bind initially to DnaJ; upon interaction with the DnaJ-bound protein, DnaK hydrolyzes its bound ATP, resulting in the formation of a stable complex. GrpE releases ADP from DnaK; ATP binding to DnaK triggers the release of the substrate protein, thus completing the reaction cycle. Several rounds of ATP-dependent interactions between DnaJ, DnaK and GrpE are required for fully efficient folding. Also involved, together with DnaK and GrpE, in the DNA replication of plasmids through activation of initiation proteins. This is Chaperone protein DnaJ from Blochmanniella floridana.